Here is a 168-residue protein sequence, read N- to C-terminus: Photosystem I assembly protein Ycf3 (168 aa).

TPR repeat units follow at residues 35–68 (AFTY…EIDP), 72–105 (SYIL…NPFL), and 120–153 (GEQA…TPGN).

This sequence belongs to the Ycf3 family.

The protein resides in the plastid. The protein localises to the chloroplast thylakoid membrane. In terms of biological role, essential for the assembly of the photosystem I (PSI) complex. May act as a chaperone-like factor to guide the assembly of the PSI subunits. This is Photosystem I assembly protein Ycf3 from Acorus calamus var. americanus (American sweet flag).